The chain runs to 152 residues: UPF0225 protein YchJ (152 aa).

This sequence belongs to the UPF0225 family.

In Escherichia coli O6:K15:H31 (strain 536 / UPEC), this protein is UPF0225 protein YchJ.